Consider the following 665-residue polypeptide: Intraflagellar transport protein 70A (665 aa).

TPR repeat units lie at residues 11-44, 45-78, 154-187, 189-221, 393-424, 425-457, and 459-492; these read DGEFTALVYRLIRDARYAEAVQLLGRELQRSPRS, RAGLSLLGYCYYRLQEFALAAECYEQLGQLHPEL, TDGQVNLGCLLYKEGQYEAACSKFSATLQASGYQ, DLSYNLALAYYSSRQYASALKHIAEIIERGIRQ, LTKQVQEARHNRDDEAIKKAVNEYDETMEKYI, PVLMAQAKIYWNLENYPMVEKVFRKSVEFCNDH, and VWKLNVAHVLFMQENKYKEAIGFYEPIVKKHYDN. The stretch at 508-535 forms a coiled coil; sequence YIMTSQNEEAEELMRKIEKEEEQLSYDD. A TPR 8 repeat occupies 544–577; that stretch reads CIVNLVIGTLYCAKGNYEFGISRVIKSLEPYNKK.

Belongs to the TTC30/dfy-1/fleer family.

Its subcellular location is the cell projection. The protein resides in the cilium. Functionally, required for polyglutamylation of axonemal tubulin. Plays a role in anterograde intraflagellar transport (IFT), the process by which cilia precursors are transported from the base of the cilium to the site of their incorporation at the tip. In Homo sapiens (Human), this protein is Intraflagellar transport protein 70A.